A 451-amino-acid polypeptide reads, in one-letter code: Phenylalanine--tRNA ligase, mitochondrial (451 aa).

Substrate is bound by residues 157-160, R179, 186-188, and 193-195; these read SAHQ, QHY, and QLE. An N6-acetyllysine modification is found at K202. Substrate-binding residues include E287 and F312. The FDX-ACB domain occupies 358 to 450; the sequence is SKYPAVFNDI…AVQLLGVEGR (93 aa).

It belongs to the class-II aminoacyl-tRNA synthetase family. Monomer.

Its subcellular location is the mitochondrion matrix. It is found in the mitochondrion. The enzyme catalyses tRNA(Phe) + L-phenylalanine + ATP = L-phenylalanyl-tRNA(Phe) + AMP + diphosphate + H(+). In terms of biological role, is responsible for the charging of tRNA(Phe) with phenylalanine in mitochondrial translation. To a lesser extent, also catalyzes direct attachment of m-Tyr (an oxidized version of Phe) to tRNA(Phe), thereby opening the way for delivery of the misacylated tRNA to the ribosome and incorporation of ROS-damaged amino acid into proteins. In Mus musculus (Mouse), this protein is Phenylalanine--tRNA ligase, mitochondrial (Fars2).